A 404-amino-acid chain; its full sequence is Homocysteine-responsive endoplasmic reticulum-resident ubiquitin-like domain member 2 protein (404 aa).

In terms of domain architecture, Ubiquitin-like spans 10–89 (VTLIIKAPNQ…HMVHLVCASR (80 aa)). The interval 86–153 (CASRSPPSSP…TLSQAQTDPA (68 aa)) is disordered. Composition is skewed to low complexity over residues 88–97 (SRSPPSSPKS) and 109–126 (SSTS…PSPS). A compositionally biased stretch (polar residues) spans 127 to 153 (QESLSLVTGSSEGLRQRTLSQAQTDPA). A helical membrane pass occupies residues 301-321 (FIMVMGAMLLVYLHQAGWFPF).

It localises to the membrane. Functionally, could be involved in the unfolded protein response (UPR) pathway. The sequence is that of Homocysteine-responsive endoplasmic reticulum-resident ubiquitin-like domain member 2 protein (Herpud2) from Mus musculus (Mouse).